Reading from the N-terminus, the 266-residue chain is Glutamate racemase (266 aa).

Residues 9 to 10 (DS) and 41 to 42 (YG) contribute to the substrate site. Cys-73 functions as the Proton donor/acceptor in the catalytic mechanism. A substrate-binding site is contributed by 74 to 75 (NS). Cys-183 (proton donor/acceptor) is an active-site residue. Residue 184 to 185 (TH) coordinates substrate.

It belongs to the aspartate/glutamate racemases family.

The catalysed reaction is L-glutamate = D-glutamate. The protein operates within cell wall biogenesis; peptidoglycan biosynthesis. Functionally, provides the (R)-glutamate required for cell wall biosynthesis. The chain is Glutamate racemase from Shewanella loihica (strain ATCC BAA-1088 / PV-4).